The sequence spans 185 residues: MDIDPYKEFGASVELLSFLPSDFFPSVRDLLDTSAALYREALESPEHCSPHHTALRQAILCWGELMTLATWVGNNLQDPASRDQVVNYVNTNMGLKIRQLLWFHISCLTFGRQTVLEYLVSFGVWIRTPPPYRPPNAPILSTLPETTVVRRRDRGRSPRRRTPSPRRRRSQSPRRRRSQSRESQC.

The segment at 135 to 185 (PNAPILSTLPETTVVRRRDRGRSPRRRTPSPRRRRSQSPRRRRSQSRESQC) is disordered. The span at 149–178 (VRRRDRGRSPRRRTPSPRRRRSQSPRRRRS) shows a compositional bias: basic residues. S157, S164, and S172 each carry phosphoserine; by host. One copy of the 1; half-length repeat lies at 157 to 163 (SPRRRTP). The interval 157-179 (SPRRRTPSPRRRRSQSPRRRRSQ) is 3 X 8 AA repeats of S-P-R-R-R-[PR]-S-Q. The Bipartite nuclear localization signal motif lies at 160-177 (RRTPSPRRRRSQSPRRRR). Repeat copies occupy residues 164–171 (SPRRRRSQ) and 172–179 (SPRRRRSQ). The segment at 179–185 (QSRESQC) is RNA binding.

This sequence belongs to the orthohepadnavirus core antigen family. Homodimerizes, then multimerizes. Interacts with cytosol exposed regions of viral L glycoprotein present in the reticulum-to-Golgi compartment. Interacts with human FLNB. Phosphorylated form interacts with host importin alpha; this interaction depends on the exposure of the NLS, which itself depends upon genome maturation and/or phosphorylation of the capsid protein. Interacts with host NUP153. In terms of processing, phosphorylated by host SRPK1, SRPK2, and maybe protein kinase C or GAPDH. Phosphorylation is critical for pregenomic RNA packaging. Protein kinase C phosphorylation is stimulated by HBx protein and may play a role in transport of the viral genome to the nucleus at the late step during the viral replication cycle.

It localises to the virion. The protein localises to the host cytoplasm. Its function is as follows. Self assembles to form an icosahedral capsid. Most capsids appear to be large particles with an icosahedral symmetry of T=4 and consist of 240 copies of capsid protein, though a fraction forms smaller T=3 particles consisting of 180 capsid proteins. Entering capsids are transported along microtubules to the nucleus. Phosphorylation of the capsid is thought to induce exposure of nuclear localization signal in the C-terminal portion of the capsid protein that allows binding to the nuclear pore complex via the importin (karyopherin-) alpha and beta. Capsids are imported in intact form through the nuclear pore into the nuclear basket, where it probably binds NUP153. Only capsids that contain the mature viral genome can release the viral DNA and capsid protein into the nucleoplasm. Immature capsids get stuck in the basket. Capsids encapsulate the pre-genomic RNA and the P protein. Pre-genomic RNA is reverse-transcribed into DNA while the capsid is still in the cytoplasm. The capsid can then either be directed to the nucleus, providing more genomes for transcription, or bud through the endoplasmic reticulum to provide new virions. The polypeptide is Capsid protein (Hepatitis B virus genotype A3 (isolate Cameroon/CMR711/1994) (HBV-A)).